The primary structure comprises 239 residues: Acyl-protein thioesterase 1 (239 aa).

Residues serine 124, aspartate 180, and histidine 213 each act as charge relay system in the active site.

It belongs to the AB hydrolase superfamily. AB hydrolase 2 family.

The protein localises to the cytoplasm. The protein resides in the nucleus. The enzyme catalyses S-hexadecanoyl-L-cysteinyl-[protein] + H2O = L-cysteinyl-[protein] + hexadecanoate + H(+). In terms of biological role, hydrolyzes fatty acids from S-acylated cysteine residues in proteins with a strong preference for palmitoylated G-alpha proteins over other acyl substrates. Mediates the deacylation of G-alpha proteins such as GPA1 in vivo, but has weak or no activity toward palmitoylated Ras proteins. Has weak lysophospholipase activity in vitro; however such activity may not exist in vivo. This Emericella nidulans (strain FGSC A4 / ATCC 38163 / CBS 112.46 / NRRL 194 / M139) (Aspergillus nidulans) protein is Acyl-protein thioesterase 1.